We begin with the raw amino-acid sequence, 524 residues long: CTP synthase (524 aa).

The amidoligase domain stretch occupies residues 1–263 (MKKYVIVTGG…HEKIASKLNV (263 aa)). CTP is bound at residue serine 13. A UTP-binding site is contributed by serine 13. Residues 14–19 (GIGKGI) and aspartate 71 each bind ATP. Mg(2+)-binding residues include aspartate 71 and glutamate 137. CTP is bound by residues 144 to 146 (DIE), 184 to 189 (KTKPTQ), and lysine 220. UTP contacts are provided by residues 184–189 (KTKPTQ) and lysine 220. The Glutamine amidotransferase type-1 domain maps to 282–524 (RIALVGKYLG…YLRKVLEGSQ (243 aa)). Glycine 342 lines the L-glutamine pocket. Cysteine 369 serves as the catalytic Nucleophile; for glutamine hydrolysis. Residues 370-373 (LGMQ), glutamate 393, and arginine 451 contribute to the L-glutamine site. Catalysis depends on residues histidine 499 and glutamate 501.

Belongs to the CTP synthase family. In terms of assembly, homotetramer.

The catalysed reaction is UTP + L-glutamine + ATP + H2O = CTP + L-glutamate + ADP + phosphate + 2 H(+). It carries out the reaction L-glutamine + H2O = L-glutamate + NH4(+). It catalyses the reaction UTP + NH4(+) + ATP = CTP + ADP + phosphate + 2 H(+). Its pathway is pyrimidine metabolism; CTP biosynthesis via de novo pathway; CTP from UDP: step 2/2. Its activity is regulated as follows. Allosterically activated by GTP, when glutamine is the substrate; GTP has no effect on the reaction when ammonia is the substrate. The allosteric effector GTP functions by stabilizing the protein conformation that binds the tetrahedral intermediate(s) formed during glutamine hydrolysis. Inhibited by the product CTP, via allosteric rather than competitive inhibition. In terms of biological role, catalyzes the ATP-dependent amination of UTP to CTP with either L-glutamine or ammonia as the source of nitrogen. Regulates intracellular CTP levels through interactions with the four ribonucleotide triphosphates. The polypeptide is CTP synthase (Thermotoga maritima (strain ATCC 43589 / DSM 3109 / JCM 10099 / NBRC 100826 / MSB8)).